The chain runs to 421 residues: Glutamate-1-semialdehyde 2,1-aminomutase 1 (421 aa).

Lys-258 carries the N6-(pyridoxal phosphate)lysine modification.

It belongs to the class-III pyridoxal-phosphate-dependent aminotransferase family. HemL subfamily. Pyridoxal 5'-phosphate is required as a cofactor.

It localises to the cytoplasm. It carries out the reaction (S)-4-amino-5-oxopentanoate = 5-aminolevulinate. It participates in porphyrin-containing compound metabolism; protoporphyrin-IX biosynthesis; 5-aminolevulinate from L-glutamyl-tRNA(Glu): step 2/2. The sequence is that of Glutamate-1-semialdehyde 2,1-aminomutase 1 from Cenarchaeum symbiosum (strain A).